The following is a 290-amino-acid chain: Shikimate dehydrogenase (NADP(+)) (290 aa).

Shikimate contacts are provided by residues 18 to 20 (SYS) and threonine 66. Catalysis depends on lysine 70, which acts as the Proton acceptor. Residue glutamate 82 coordinates NADP(+). Residues asparagine 91 and aspartate 106 each contribute to the shikimate site. Residues 130–134 (GSGGA) and methionine 229 contribute to the NADP(+) site. Tyrosine 231 contributes to the shikimate binding site. NADP(+) is bound at residue glycine 252.

The protein belongs to the shikimate dehydrogenase family. As to quaternary structure, homodimer.

The catalysed reaction is shikimate + NADP(+) = 3-dehydroshikimate + NADPH + H(+). The protein operates within metabolic intermediate biosynthesis; chorismate biosynthesis; chorismate from D-erythrose 4-phosphate and phosphoenolpyruvate: step 4/7. Involved in the biosynthesis of the chorismate, which leads to the biosynthesis of aromatic amino acids. Catalyzes the reversible NADPH linked reduction of 3-dehydroshikimate (DHSA) to yield shikimate (SA). This is Shikimate dehydrogenase (NADP(+)) from Chlorobium phaeovibrioides (strain DSM 265 / 1930) (Prosthecochloris vibrioformis (strain DSM 265)).